Reading from the N-terminus, the 153-residue chain is MARNTLSSRFRRVDIDEFDENKFVDEHEEAAAASGEPGPDPCEVDGLLRQGDMLRAFHAALRNSPINTKNQAVKERAQGIVLKVLTNFKSSEIEQAVQSLDRNGIDLLMKYIYKGFEKPTENSSAVLLQWHEKALAVGGLGSIIRVLTARKTV.

S64 is subject to Phosphoserine.

This sequence belongs to the ARPC5 family. As to quaternary structure, may be a component of the Arp2/3 complex in which it may replace ARPC5.

Its subcellular location is the cytoplasm. It is found in the cytoskeleton. May function as component of the Arp2/3 complex which is involved in regulation of actin polymerization and together with an activating nucleation-promoting factor (NPF) mediates the formation of branched actin networks. This is Actin-related protein 2/3 complex subunit 5-like protein (Arpc5l) from Rattus norvegicus (Rat).